A 165-amino-acid polypeptide reads, in one-letter code: Nucleotide-binding protein MXAN_1478 (165 aa).

Belongs to the YajQ family.

Functionally, nucleotide-binding protein. The protein is Nucleotide-binding protein MXAN_1478 of Myxococcus xanthus (strain DK1622).